Reading from the N-terminus, the 141-residue chain is ATP synthase epsilon chain (141 aa).

This sequence belongs to the ATPase epsilon chain family. As to quaternary structure, F-type ATPases have 2 components, CF(1) - the catalytic core - and CF(0) - the membrane proton channel. CF(1) has five subunits: alpha(3), beta(3), gamma(1), delta(1), epsilon(1). CF(0) has three main subunits: a, b and c.

The protein localises to the cell inner membrane. Functionally, produces ATP from ADP in the presence of a proton gradient across the membrane. This chain is ATP synthase epsilon chain, found in Pseudomonas aeruginosa (strain LESB58).